The sequence spans 99 residues: Plastocyanin (99 aa).

In terms of domain architecture, Plastocyanin-like spans 1–99 (IEVLLGGDDG…AGMVGKVTVN (99 aa)). Cu cation-binding residues include His-37, Cys-84, His-87, and Met-92.

The protein belongs to the plastocyanin family. The cofactor is Cu(2+).

Its subcellular location is the plastid. The protein localises to the chloroplast thylakoid membrane. Its function is as follows. Participates in electron transfer between P700 and the cytochrome b6-f complex in photosystem I. The polypeptide is Plastocyanin (PETE) (Cucurbita pepo (Vegetable marrow)).